The sequence spans 238 residues: Epoxyqueuosine reductase QueH (238 aa).

C43, C44, C129, and C132 together coordinate [4Fe-4S] cluster. Residues C211 and C213 are joined by a disulfide bond.

It belongs to the QueH family.

It carries out the reaction epoxyqueuosine(34) in tRNA + AH2 = queuosine(34) in tRNA + A + H2O. It participates in tRNA modification; tRNA-queuosine biosynthesis. Functionally, catalyzes the conversion of epoxyqueuosine (oQ) to queuosine (Q), which is a hypermodified base found in the wobble positions of tRNA(Asp), tRNA(Asn), tRNA(His) and tRNA(Tyr). This is Epoxyqueuosine reductase QueH from Staphylococcus epidermidis (strain ATCC 12228 / FDA PCI 1200).